The following is a 206-amino-acid chain: Probable N-acetyltransferase 14 (206 aa).

An N-acetyltransferase domain is found at 9-206 (LSVREMREEE…TIVQEFRKDI (198 aa)). The next 2 membrane-spanning stretches (helical) occupy residues 37-57 (LILYILTRPMTLLLMAVASSG) and 60-80 (FILNSFSVALVIPVLLTIVGL).

Belongs to the camello family.

It localises to the membrane. Its function is as follows. Probable acetyltransferase. This Xenopus tropicalis (Western clawed frog) protein is Probable N-acetyltransferase 14 (nat14).